A 695-amino-acid polypeptide reads, in one-letter code: Potassium voltage-gated channel subfamily KQT member 4 (695 aa).

Residues 1 to 21 (MAEAPPRRLGLGPPPGDAPRA) are disordered. Residues 1–96 (MAEAPPRRLG…VYNVLERPRG (96 aa)) lie on the Cytoplasmic side of the membrane. An a 1,2-diacyl-sn-glycero-3-phospho-(1D-myo-inositol-4,5-bisphosphate)-binding site is contributed by arginine 93. The chain crosses the membrane as a helical span at residues 97-118 (WAFVYHVFIFLLVFSCLVLSVL). Topologically, residues 119 to 129 (STIQEHQELAN) are extracellular. A helical transmembrane segment spans residues 130–152 (ECLLILEFVMIVVFGLEYIVRVW). Topologically, residues 153–168 (SAGCCCRYRGWQGRFR) are cytoplasmic. A helical transmembrane segment spans residues 169-191 (FARKPFCVIDFIVFVASVAVIAA). Residue lysine 172 participates in a 1,2-diacyl-sn-glycero-3-phospho-(1D-myo-inositol-4,5-bisphosphate) binding. Over 192–202 (GTQGNIFATSA) the chain is Extracellular. Residues 203-223 (LRSMRFLQILRMVRMDRRGGT) form a helical; Voltage-sensor membrane-spanning segment. Arginine 219, arginine 220, lysine 225, and serine 235 together coordinate a 1,2-diacyl-sn-glycero-3-phospho-(1D-myo-inositol-4,5-bisphosphate). At 224-235 (WKLLGSVVYAHS) the chain is on the cytoplasmic side. The chain crosses the membrane as a helical span at residues 236–258 (KELITAWYIGFLVLIFASFLVYL). Over 259–270 (AEKDANSDFSSY) the chain is Extracellular. Residues 271 to 292 (ADSLWWGTITLTTIGYGDKTPH) constitute an intramembrane region (pore-forming). Threonine 293 is a topological domain (extracellular). A helical transmembrane segment spans residues 294–322 (WLGRVLAAGFALLGISFFALPAGILGSGF). Residues 323–695 (ALKVQEQHRQ…ISRSVSTNMD (373 aa)) lie on the Cytoplasmic side of the membrane. Histidine 330 and lysine 333 together coordinate a 1,2-diacyl-sn-glycero-3-phospho-(1D-myo-inositol-4,5-bisphosphate). Positions 342-351 (AANLIQAAWR) are interaction with CALM. 2 disordered regions span residues 400 to 480 (RRAP…TKVQ) and 496 to 515 (RLKP…AEEK). 2 stretches are compositionally biased toward polar residues: residues 443-452 (GSSQRRTGPS) and 463-480 (TSPS…TKVQ). The tract at residues 535–549 (RSIRILKFLVAKRKF) is interaction with CALM. The interval 546 to 650 (KRKFKETLRP…SRCLRSGTSA (105 aa)) is C-terminal assembly domain (tetramerization). The disordered stretch occupies residues 587-606 (VGRGPGDRKAREKGDKGPSD). The span at 591–605 (PGDRKAREKGDKGPS) shows a compositional bias: basic and acidic residues. Residues 615–636 (MMGRVVKVEKQVQSIEHKLDLL) adopt a coiled-coil conformation.

This sequence belongs to the potassium channel family. KQT (TC 1.A.1.15) subfamily. Kv7.4/KCNQ4 sub-subfamily. As to quaternary structure, homotetramer. Interacts (via C-terminus) with calmodulin; forms a heterooctameric structure (with 4:4 KCNQ1:CALM stoichiometry); the interaction is calcium-independent, constitutive, participates in the proper assembly of a functional channel. The interaction with calcium-free CALM controls channel trafficking whereas interaction with calcium-bound CALM regulates channel gating. May form a functional heteromultimeric channel with KCNQ3. Interacts with HSP90AB1; promotes cell surface expression of KCNQ4. Expressed in the outer, but not the inner, sensory hair cells of the cochlea. Slightly expressed in heart, brain and skeletal muscle.

The protein localises to the basal cell membrane. It carries out the reaction K(+)(in) = K(+)(out). Two molecules of phosphatidylinositol-4,5-bisphosphate (PIP2-I and PIP2-II) are essential to activate KCNQ4 channel by inducing the coupling of the voltage-sensing domain (VSD) and the pore-forming domain (PD). Upon channel activation, PIP2-I and PIP2-II disrupt the VSD-calmodulin/CALM interaction, causing the release of CALM from the VSD which triggers the opening of the gate. Calcium suppresses KCNQ4 channel current through calcium-bound CALM C-terminus. Therefore CALM acts as calcium sensor that controls channel activity. ML213 potentiates KCNQ4 channel. KCNQ4 channel is blocked by linopirdin, XE991 and bepridil, whereas clofilium is without significant effect. Muscarinic agonist oxotremorine-M strongly suppress KCNQ4 current in CHO cells in which cloned KCNQ4 channels were coexpressed with M1 muscarinic receptors. Functionally, pore-forming subunit of the voltage-gated potassium (Kv) channel involved in the regulation of sensory cells excitability in the cochlea. KCNQ4/Kv7.4 channel is composed of 4 pore-forming subunits assembled as tetramers. Promotes the outflow of potassium ions in the repolarization phase of action potential which plays a role in regulating membrane potential of excitable cells. The channel conducts a slowly activating and deactivating current. Current often shows some inward rectification at positive potentials. Channel may be selectively permeable in vitro to other cations besides potassium, in decreasing order of affinity K(+) = Rb(+) &gt; Cs(+) &gt; Na(+). Important for normal physiological function of inner ear such as sensory perception of sound. The chain is Potassium voltage-gated channel subfamily KQT member 4 from Homo sapiens (Human).